Reading from the N-terminus, the 168-residue chain is DAZ-associated protein 2 (168 aa).

The segment covering 1–13 (MNSKGQYPTQPTY) has biased composition (low complexity). The segment at 1 to 25 (MNSKGQYPTQPTYPVQPPGNPVYPQ) is disordered. Positions 39–42 (PPAY) match the PPAY motif. Ser77 is subject to Phosphoserine.

Interacts with SOX6. Interacts with DAZ1 and DAZL. Interacts with IL17RB. May interact with FAM168B. Interacts with INCA1. Interacts with EIF4G1 and EIF4G2. Interacts (via PPAY motif) with NEDD4 (via WW domains). Interacts with transcription factor TCF4; the interaction results in localization of DAZAP2 to the nucleus. Interacts with transcription factors TCF7 and TCF7L1. Interacts with transcription factor LEF1. Interacts with serine/threonine-protein kinase HIPK2; the interaction results in phosphorylation of DAZAP2 which causes localization of DAZAP2 to the nucleus, reduces interaction of DAZAP2 with HIPK2 and prevents DAZAP2-dependent degradation of HIPK2. Interacts with ubiquitin ligase SIAH1; the interaction is decreased following phosphorylation of DAZAP2 by HIPK2. Interacts with TP53; the interaction is triggered by DNA damage. Ubiquitinated by SMURF2, leading to proteasomal degradation. Ubiquitinated by NEDD4, leading to proteasomal degradation. In terms of processing, following DNA damage, phosphorylated by HIPK2 which promotes DAZAP2 localization to the nucleus, reduces interaction of DAZAP2 with HIPK2 and SIAH1, and prevents DAZAP2-dependent ubiquitination of HIPK2 by E3 ubiquitin-protein ligase SIAH1 and subsequent HIPK2 proteasomal degradation.

The protein localises to the cytoplasm. It localises to the nucleus. The protein resides in the nucleus speckle. Its subcellular location is the nuclear body. It is found in the stress granule. Its function is as follows. In unstressed cells, promotes SIAH1-mediated polyubiquitination and degradation of the serine/threonine-protein kinase HIPK2, probably by acting as a loading factor that potentiates complex formation between HIPK2 and ubiquitin ligase SIAH1. In response to DNA damage, localizes to the nucleus following phosphorylation by HIPK2 and modulates the expression of a subset of TP53/p53 target genes by binding to TP53 at target gene promoters. This limits the expression of a number of cell death-mediating TP53 target genes, reducing DNA damage-induced cell death. Enhances the binding of transcription factor TCF7L2/TCF4, a Wnt signaling pathway effector, to the promoters of target genes. Plays a role in stress granule formation. The polypeptide is DAZ-associated protein 2 (Bos taurus (Bovine)).